A 310-amino-acid chain; its full sequence is Transcription initiation factor IIB (310 aa).

2 tandem repeats follow at residues 126–209 (REIT…VREL) and 220–301 (RYVS…ELVQ).

Belongs to the TFIIB family.

Stabilizes TBP binding to an archaeal box-A promoter. Also responsible for recruiting RNA polymerase II to the pre-initiation complex (DNA-TBP-TFIIB). This is Transcription initiation factor IIB from Pyrodictium occultum.